The sequence spans 327 residues: Putative ABC transporter ATP-binding protein MM_0887 (327 aa).

The segment at 1–44 is disordered; that stretch reads MSKSTPLKSSIIRADLPEQAEGRTGPETGKDPEKTGNSEGKTDT. Basic and acidic residues predominate over residues 28–44; sequence TGKDPEKTGNSEGKTDT. Positions 47-282 constitute an ABC transporter domain; the sequence is IEIKDLCHRY…PALLRKAHLR (236 aa). ATP is bound at residue 81–88; the sequence is GANGAGKS.

The protein belongs to the ABC transporter superfamily.

Its subcellular location is the cell membrane. Functionally, probably part of an ABC transporter complex. Responsible for energy coupling to the transport system. This is Putative ABC transporter ATP-binding protein MM_0887 from Methanosarcina mazei (strain ATCC BAA-159 / DSM 3647 / Goe1 / Go1 / JCM 11833 / OCM 88) (Methanosarcina frisia).